Here is a 336-residue protein sequence, read N- to C-terminus: Zinc transporter ZIP11 (336 aa).

The next 7 helical transmembrane spans lie at 12 to 32, 44 to 64, 75 to 95, 188 to 208, 258 to 278, 280 to 300, and 316 to 336; these read LLGTLLTWGLTAAGSALVFIF, LGFAAGVMLAASYWSLLAPAI, SFAFVPAAVGFLVGAGFVYLA, IMLLILAITIHNIPEGLAVGV, WYGQLSGMVEPIAGLLGTIAI, LAEPLLPYALAFAAGAMVYVV, and LASWTCIFGFIVMMSLDVGLG.

This sequence belongs to the ZIP transporter (TC 2.A.5) family.

The protein resides in the cell membrane. Its subcellular location is the nucleus. It is found in the cytoplasm. It localises to the golgi apparatus. Functions as a cellular zinc transporter. The polypeptide is Zinc transporter ZIP11 (slc39a11) (Xenopus tropicalis (Western clawed frog)).